The primary structure comprises 227 residues: Large ribosomal subunit protein uL3 (227 aa).

An N5-methylglutamine modification is found at Gln-158.

Belongs to the universal ribosomal protein uL3 family. As to quaternary structure, part of the 50S ribosomal subunit. Forms a cluster with proteins L14 and L19. Post-translationally, methylated by PrmB.

Functionally, one of the primary rRNA binding proteins, it binds directly near the 3'-end of the 23S rRNA, where it nucleates assembly of the 50S subunit. In Polaromonas sp. (strain JS666 / ATCC BAA-500), this protein is Large ribosomal subunit protein uL3.